Here is a 184-residue protein sequence, read N- to C-terminus: Large ribosomal subunit protein uL6 (184 aa).

It belongs to the universal ribosomal protein uL6 family. As to quaternary structure, part of the 50S ribosomal subunit.

Its function is as follows. This protein binds to the 23S rRNA, and is important in its secondary structure. It is located near the subunit interface in the base of the L7/L12 stalk, and near the tRNA binding site of the peptidyltransferase center. The chain is Large ribosomal subunit protein uL6 from Cytophaga hutchinsonii (strain ATCC 33406 / DSM 1761 / CIP 103989 / NBRC 15051 / NCIMB 9469 / D465).